Consider the following 376-residue polypeptide: MNWIFHLFCAVYGIFCEENSFTIYWNVPTHQCEKLNVSFISLLKELNIVHNKDGNFSGESFTILYSPGLWPSMEHKNITNGGMPQCGNMTLHLEKLEKDVKEKLKDDGYSGLAVIDMESWRPVFRQNTGWMIKYRELTFEQYNKTLAEEYKNNTTNDKLRNRLIKESAEIFEAPAKDFLMNSTELVKKYWKDAKWGYYGFPYCFNMGVAANARNESCPKIVKEENNKTEWLFKSYDYWFPSVYITKVNFTCEERGQLVRGRVTEYQRLRKEFNPKAKIYPYVWFLYNLSNEYLSKEDLEMSLKILKMGKMDGAVIWGSSKNLTKECECKDLYDYVNGTMRTVLEGLKKPENNVKWNGSCQETSDAARYLKNCTDKQ.

The first 16 residues, 1-16 (MNWIFHLFCAVYGIFC), serve as a signal peptide directing secretion. 2 disulfide bridges follow: Cys-32–Cys-328 and Cys-203–Cys-217. N-linked (GlcNAc...) asparagine glycans are attached at residues Asn-36, Asn-55, Asn-77, and Asn-88. The Proton donor role is filled by Glu-118. N-linked (GlcNAc...) asparagine glycans are attached at residues Asn-143, Asn-153, Asn-181, Asn-214, Asn-226, Asn-248, Asn-287, Asn-321, Asn-336, Asn-356, and Asn-371.

It belongs to the glycosyl hydrolase 56 family. Post-translationally, glycosylated; glycosylation is critical for enzymatic activity. Female salivary gland (at protein level).

Its subcellular location is the secreted. The enzyme catalyses Random hydrolysis of (1-&gt;4)-linkages between N-acetyl-beta-D-glucosamine and D-glucuronate residues in hyaluronate.. Functionally, hydrolyzes high molecular weight hyaluronic acid to produce small oligosaccharides. Up-regulates expression of CSF2, CSF3, LIF, CXCL1, CXCL2 and CXCL8 in cultured human dermal microvascular endothelial cells. Promotes host neutrophil recruitment at the injection site. (Microbial infection) Probably promotes Leishmania major infection in the host. This is Salivary hyaluronidase from Lutzomyia longipalpis (Sand fly).